The sequence spans 330 residues: D-xylose-binding periplasmic protein (330 aa).

A signal peptide spans 1 to 23 (MKIKNILLTLCTSLLLTNVAAHA).

This sequence belongs to the bacterial solute-binding protein 2 family.

It localises to the periplasm. Its function is as follows. Involved in the high-affinity D-xylose membrane transport system. Binds with high affinity to xylose. In Escherichia coli (strain K12), this protein is D-xylose-binding periplasmic protein (xylF).